The following is a 96-amino-acid chain: ATP synthase subunit f, mitochondrial (96 aa).

It belongs to the ATPase F chain family.

Its subcellular location is the mitochondrion. The protein resides in the mitochondrion inner membrane. In terms of biological role, mitochondrial membrane ATP synthase (F(1)F(0) ATP synthase or Complex V) produces ATP from ADP in the presence of a proton gradient across the membrane which is generated by electron transport complexes of the respiratory chain. F-type ATPases consist of two structural domains, F(1) - containing the extramembraneous catalytic core and F(0) - containing the membrane proton channel, linked together by a central stalk and a peripheral stalk. During catalysis, ATP synthesis in the catalytic domain of F(1) is coupled via a rotary mechanism of the central stalk subunits to proton translocation. The sequence is that of ATP synthase subunit f, mitochondrial (atp17) from Schizosaccharomyces pombe (strain 972 / ATCC 24843) (Fission yeast).